The sequence spans 570 residues: NADH-ubiquinone oxidoreductase chain 5 (570 aa).

A run of 16 helical transmembrane segments spans residues 2 to 22 (FSFF…FKHF), 27 to 47 (GVFL…LSNL), 56 to 76 (LIAI…VNFS), 77 to 97 (FYID…GVFV), 109 to 129 (PHIS…IILV), 134 to 154 (LVVF…LINF), 179 to 199 (VLIA…EAIL), 221 to 241 (LISF…GFHV), 251 to 271 (VPAS…FLIM), 285 to 305 (LVTA…AVFQ), 311 to 330 (ILAY…CSFG), 335 to 357 (VIVY…GNLI), 380 to 400 (FFFL…FGFY), 417 to 437 (AIFC…FNIL), 476 to 496 (IFLL…FYLL), and 524 to 544 (LLNY…LVLF).

This sequence belongs to the complex I subunit 5 family.

It localises to the mitochondrion inner membrane. It carries out the reaction a ubiquinone + NADH + 5 H(+)(in) = a ubiquinol + NAD(+) + 4 H(+)(out). Its function is as follows. Core subunit of the mitochondrial membrane respiratory chain NADH dehydrogenase (Complex I) that is believed to belong to the minimal assembly required for catalysis. Complex I functions in the transfer of electrons from NADH to the respiratory chain. The immediate electron acceptor for the enzyme is believed to be ubiquinone. This chain is NADH-ubiquinone oxidoreductase chain 5 (ND5), found in Paramecium tetraurelia.